The primary structure comprises 950 residues: Translation initiation factor IF-2 (950 aa).

Disordered regions lie at residues 69–92 (KTKTVPETAKSKQEDHPRTFAGKA) and 128–352 (KPKV…SNVP). 5 stretches are compositionally biased toward basic and acidic residues: residues 77-86 (AKSKQEDHPR), 128-158 (KPKVAEPVKKSEPKAAAKAEETKVEKVEAKA), 165-186 (AEVKTENVADKKEPVVTEEKKK), 200-234 (KRAEDIKKEQAAARPEKKKFDKNRNDRNNRNDNRR), and 291-312 (NRRDRDRKKTDSNRDNTKDGNR). Composition is skewed to polar residues over residues 322–336 (NRNQVRNARNSNWNQ) and 343–352 (YQNNQSSNVP). Residues 448 to 619 (ERPAVVTIMG…LLVAEVQELK (172 aa)) enclose the tr-type G domain. The G1 stretch occupies residues 457–464 (GHVDHGKT). 457–464 (GHVDHGKT) serves as a coordination point for GTP. The segment at 482-486 (GITQH) is G2. A G3 region spans residues 503 to 506 (DTPG). Residues 503 to 507 (DTPGH) and 557 to 560 (NKID) contribute to the GTP site. Residues 557-560 (NKID) are G4. Positions 595–597 (SAK) are G5.

The protein belongs to the TRAFAC class translation factor GTPase superfamily. Classic translation factor GTPase family. IF-2 subfamily.

It localises to the cytoplasm. In terms of biological role, one of the essential components for the initiation of protein synthesis. Protects formylmethionyl-tRNA from spontaneous hydrolysis and promotes its binding to the 30S ribosomal subunits. Also involved in the hydrolysis of GTP during the formation of the 70S ribosomal complex. This is Translation initiation factor IF-2 from Lactococcus lactis subsp. cremoris (strain SK11).